A 962-amino-acid chain; its full sequence is Splicing regulator ARVCF (962 aa).

Positions Ser-8 to Gln-46 form a coiled coil. A disordered region spans residues Thr-95–Thr-122. Phosphothreonine is present on residues Thr-102 and Thr-104. Positions Thr-102–Asp-114 are enriched in polar residues. Arg-170 carries the post-translational modification Omega-N-methylarginine. Disordered regions lie at residues Gly-186 to Arg-253 and Arg-266 to Pro-290. Residues Arg-206 to Pro-217 show a composition bias toward low complexity. Ser-267 is subject to Phosphoserine. Over residues Ala-270 to Pro-280 the composition is skewed to acidic residues. 4 positions are modified to phosphoserine: Ser-332, Ser-335, Ser-343, and Ser-345. 6 ARM repeats span residues Ser-348–Phe-387, Glu-390–Tyr-429, Thr-433–Thr-467, Leu-468–Ser-508, Leu-526–Asn-565, and Met-575–Ala-622. Residues Asp-590–Ala-614 form a disordered region. Residue Ser-606 is modified to Phosphoserine. Positions Gln-607 to Lys-623 match the Nuclear localization signal motif. Thr-642 carries the phosphothreonine modification. ARM repeat units follow at residues Pro-646 to Ala-686, Thr-699 to Leu-738, Asp-739 to Asn-781, and Thr-782 to Leu-826. The tract at residues Val-776 to Val-962 is required for interaction with RNA-binding proteins DDX5, HNRNPH2 and SRSF1 and with mRNAs. The tract at residues Ala-854–Val-962 is disordered. Residues Ser-864 and Ser-871 each carry the phosphoserine modification. The residue at position 872 (Thr-872) is a Phosphothreonine. Residues Lys-878 to Ser-887 are compositionally biased toward basic and acidic residues. Ser-915 bears the Phosphoserine mark. Basic and acidic residues predominate over residues Ala-920–Arg-932.

The protein belongs to the beta-catenin family. In terms of assembly, component of a ribonucleoprotein complex containing mRNAs and RNA-binding proteins including DDX5, HNRNPH2 and SRSF1 as well as ARVCF. Interacts (via the extreme C-terminus) with FRMPD2 (via the PDZ 2 domain). Interacts with CCDC85B. In terms of tissue distribution, found in all the examined tissues including heart, brain, liver and kidney. Found at low level in lung. Expressed in dermal connective tissue, salivary gland duct and in the corneal layer (at protein level). Expressed in arrector pili muscle (at protein level). High levels detected in epithelial cells with lower levels found in fibroblasts and T lymphocytes.

It is found in the cell junction. The protein localises to the adherens junction. Its subcellular location is the nucleus. The protein resides in the cytoplasm. In terms of biological role, contributes to the regulation of alternative splicing of pre-mRNAs. This chain is Splicing regulator ARVCF, found in Homo sapiens (Human).